Here is a 334-residue protein sequence, read N- to C-terminus: G-protein coupled receptor 12 (334 aa).

At 1-48 (MNEDPKVNLSGLPRDCIDAGAPENISAAVPSQGSVAESEPELVVNPWD) the chain is on the extracellular side. N-linked (GlcNAc...) asparagine glycans are attached at residues asparagine 8 and asparagine 24. Residues 49–69 (IVLCSSGTLICCENAVVVLII) form a helical membrane-spanning segment. Over 70-78 (FHSPSLRAP) the chain is Cytoplasmic. A helical transmembrane segment spans residues 79–99 (MFLLIGSLALADLLAGLGLII). At 100–113 (NFVFAYLLQSEATK) the chain is on the extracellular side. A helical transmembrane segment spans residues 114–134 (LVTIGLIVASFSASVCSLLAI). At 135-158 (TVDRYLSLYYALTYHSERTVTFTY) the chain is on the cytoplasmic side. The chain crosses the membrane as a helical span at residues 159–179 (VMLVMLWGTSICLGLLPVMGW). The Extracellular portion of the chain corresponds to 180–199 (NCLRDESTCSVVRPLTKNNA). A helical transmembrane segment spans residues 200–220 (AILSISFLFMFALMLQLYIQI). The Cytoplasmic portion of the chain corresponds to 221–252 (CKIVMRHAHQIALQHHFLATSHYVTTRKGVST). The helical transmembrane segment at 253-273 (LALILGTFAACWMPFTLYSLI) threads the bilayer. Topologically, residues 274-282 (ADYTYPSIY) are extracellular. The chain crosses the membrane as a helical span at residues 283 to 303 (TYATLLPATYNSIINPVIYAF). Topologically, residues 304–334 (RNQEIQKALCLICCGCIPSSLSQRARSPSDV) are cytoplasmic. Residue cysteine 317 is the site of S-palmitoyl cysteine attachment. Phosphoserine is present on residues serine 330 and serine 332.

It belongs to the G-protein coupled receptor 1 family. Expressed predominantly in the forebrain and a lesser extent in the hindbrain. Lower expression in the liver.

Its subcellular location is the cell membrane. In terms of biological role, receptor with constitutive G(s) signaling activity that stimulates cyclic AMP production. Promotes neurite outgrowth and blocks myelin inhibition in neurons. The sequence is that of G-protein coupled receptor 12 (Gpr12) from Mus musculus (Mouse).